The following is a 769-amino-acid chain: Portal protein (769 aa).

The tract at residues 458 to 479 (LEGYVNNLFKTIEGLKDVNSDL) is putative leucine zipper motif. 2 disordered regions span residues 654–675 (RGPRRTPSPSWGLPDPTEDDER) and 750–769 (RQLTNTSRRGVGCERRDRRS). Positions 760–769 (VGCERRDRRS) are enriched in basic and acidic residues.

It belongs to the herpesviridae portal protein family. In terms of assembly, homododecamerizes. Interacts with terminase subunits TRM1 and TRM3.

Its subcellular location is the virion. It localises to the host nucleus. Its function is as follows. Forms a portal in the viral capsid through which viral DNA is translocated during DNA packaging. Assembles as a dodecamer at a single fivefold axe of the T=16 icosahedric capsid. Binds to the molecular motor that translocates the viral DNA, termed terminase. This is Portal protein (54) from Homo sapiens (Human).